The sequence spans 312 residues: Malate dehydrogenase (312 aa).

NAD(+)-binding positions include 12–17 and Asp-36; that span reads GAGFTG. Residues Arg-87 and Arg-93 each coordinate substrate. NAD(+) contacts are provided by residues Asn-100 and 123-125; that span reads LTN. Residue Asn-125 participates in substrate binding. Phosphoserine is present on Ser-149. Position 156 (Arg-156) interacts with substrate. Residue His-180 is the Proton acceptor of the active site.

This sequence belongs to the LDH/MDH superfamily. MDH type 3 family.

It carries out the reaction (S)-malate + NAD(+) = oxaloacetate + NADH + H(+). Functionally, catalyzes the reversible oxidation of malate to oxaloacetate. The protein is Malate dehydrogenase of Geobacillus thermodenitrificans (strain NG80-2).